A 131-amino-acid chain; its full sequence is GATA zinc finger domain-containing protein 2 (131 aa).

Residues 21 to 55 (STATDATSADGAASETDAASATDTTSATDPTSATD) show a composition bias toward low complexity. The disordered stretch occupies residues 21-85 (STATDATSAD…RGRPYISTPP (65 aa)). Positions 57–74 (IATTNTTGITSSGPTTNG) are enriched in polar residues. The segment at 88-115 (CYDCGRTRSPYWRKGTYNGQVVHLCNAC) adopts a GATA-type zinc-finger fold.

This is GATA zinc finger domain-containing protein 2 (comH) from Dictyostelium discoideum (Social amoeba).